A 453-amino-acid polypeptide reads, in one-letter code: MTTDTIVAQATAPGRGGVGIIRISGDLATNVAMAVLGKVPKTRYADYCDFKDADDRVIDQGIALFFKGPNSFTGEDVLELQGHGGQIVLDMLIKRVMQVSGVRIAKPGEFSEQAFLNDKLDLTQAEAIADLIDATSEQAAKSALQSLQGEFSKEVHELVEQVTNLRLYVEAAIDFPDEEVDFLSDGKIANALYRIIAKLDTVQDSAKQGSIIREGMKVVIAGRPNAGKSSLLNALAGKESAIVTEIAGTTRDVLREHIHLDGMPLHIIDTAGLRDTLDTVEKIGIERAWAEIATADRVLFMVDGTTTDAVDPHDIWPDFIDRLPTRLGVTVVRNKADLTGESLEKSQEQGFDVYRISAKTGLGVEELKQHLKSLMGYQSNLEGGFIARRRHLEALELAASHLQLGKEQLEVYLAGELLAEELRMAQMALSEITGKFTSDDLLGKIFSSFCIGK.

(6S)-5-formyl-5,6,7,8-tetrahydrofolate-binding residues include Arg-22, Glu-79, and Lys-119. In terms of domain architecture, TrmE-type G spans 215 to 376 (GMKVVIAGRP…LKQHLKSLMG (162 aa)). Asn-225 is a K(+) binding site. GTP-binding positions include 225-230 (NAGKSS), 244-250 (TEIAGTT), 269-272 (DTAG), and 334-337 (NKAD). Residue Ser-229 participates in Mg(2+) binding. Thr-244, Ile-246, and Thr-249 together coordinate K(+). A Mg(2+)-binding site is contributed by Thr-250. Residue Lys-453 coordinates (6S)-5-formyl-5,6,7,8-tetrahydrofolate.

Belongs to the TRAFAC class TrmE-Era-EngA-EngB-Septin-like GTPase superfamily. TrmE GTPase family. As to quaternary structure, homodimer. Heterotetramer of two MnmE and two MnmG subunits. It depends on K(+) as a cofactor.

The protein resides in the cytoplasm. Functionally, exhibits a very high intrinsic GTPase hydrolysis rate. Involved in the addition of a carboxymethylaminomethyl (cmnm) group at the wobble position (U34) of certain tRNAs, forming tRNA-cmnm(5)s(2)U34. The polypeptide is tRNA modification GTPase MnmE (Shewanella denitrificans (strain OS217 / ATCC BAA-1090 / DSM 15013)).